Here is a 376-residue protein sequence, read N- to C-terminus: Peroxisomal membrane protein PEX14 (376 aa).

Over residues 1-12 (MASSEQAEQPNQ) the composition is skewed to polar residues. The disordered stretch occupies residues 1–24 (MASSEQAEQPNQPSSPPGSENVVP). Residue A2 is modified to N-acetylalanine. Residues 2–108 (ASSEQAEQPN…YSPRGSRWRD (107 aa)) are Peroxisomal-facing. Position 34 is an N6-acetyllysine (K34). A disordered region spans residues 70–102 (SGTAADEPSPLGPATPVVPVQPPHLTPQPYSPR). Residues 88-99 (PVQPPHLTPQPY) are compositionally biased toward pro residues. Residues 109–127 (YGALAIIMAGIAFGFHQLY) form a helical membrane-spanning segment. At 128-376 (KRYLLPLILG…EGASNETERD (249 aa)) the chain is on the cytoplasmic side. A disordered region spans residues 230–376 (PPSPSAPKIP…EGASNETERD (147 aa)). Residue S232 is modified to Phosphoserine. Composition is skewed to low complexity over residues 247–259 (SSSP…VNHH) and 265–275 (SPVSNESTSSS). Phosphoserine occurs at positions 282 and 334. Residues 323–341 (KEDEDDEDDDVSHVDEEDV) show a composition bias toward acidic residues. The span at 359 to 376 (QVEKLRRPEGASNETERD) shows a compositional bias: basic and acidic residues.

Belongs to the peroxin-14 family. As to quaternary structure, interacts with PEX13; forming the PEX13-PEX14 docking complex. Interacts with PEX5 (via WxxxF/Y motifs). Interacts with PEX19. Interacts with tubulin.

It localises to the peroxisome membrane. Functionally, component of the PEX13-PEX14 docking complex, a translocon channel that specifically mediates the import of peroxisomal cargo proteins bound to PEX5 receptor. The PEX13-PEX14 docking complex forms a large import pore which can be opened to a diameter of about 9 nm. Mechanistically, PEX5 receptor along with cargo proteins associates with the PEX14 subunit of the PEX13-PEX14 docking complex in the cytosol, leading to the insertion of the receptor into the organelle membrane with the concomitant translocation of the cargo into the peroxisome matrix. Plays a key role for peroxisome movement through a direct interaction with tubulin. This Mus musculus (Mouse) protein is Peroxisomal membrane protein PEX14.